The primary structure comprises 241 residues: Pyridoxine 5'-phosphate synthase (241 aa).

Asn-7 contacts 3-amino-2-oxopropyl phosphate. Asp-9–His-10 contributes to the 1-deoxy-D-xylulose 5-phosphate binding site. Arg-18 lines the 3-amino-2-oxopropyl phosphate pocket. The Proton acceptor role is filled by His-43. The 1-deoxy-D-xylulose 5-phosphate site is built by Arg-45 and His-50. The Proton acceptor role is filled by Glu-70. Thr-100 is a binding site for 1-deoxy-D-xylulose 5-phosphate. His-191 acts as the Proton donor in catalysis. Residues Gly-192 and Gly-213–His-214 contribute to the 3-amino-2-oxopropyl phosphate site.

Belongs to the PNP synthase family. As to quaternary structure, homooctamer; tetramer of dimers.

It is found in the cytoplasm. It catalyses the reaction 3-amino-2-oxopropyl phosphate + 1-deoxy-D-xylulose 5-phosphate = pyridoxine 5'-phosphate + phosphate + 2 H2O + H(+). The protein operates within cofactor biosynthesis; pyridoxine 5'-phosphate biosynthesis; pyridoxine 5'-phosphate from D-erythrose 4-phosphate: step 5/5. Functionally, catalyzes the complicated ring closure reaction between the two acyclic compounds 1-deoxy-D-xylulose-5-phosphate (DXP) and 3-amino-2-oxopropyl phosphate (1-amino-acetone-3-phosphate or AAP) to form pyridoxine 5'-phosphate (PNP) and inorganic phosphate. The protein is Pyridoxine 5'-phosphate synthase of Solidesulfovibrio magneticus (strain ATCC 700980 / DSM 13731 / RS-1) (Desulfovibrio magneticus).